The primary structure comprises 138 residues: Putative pre-16S rRNA nuclease (138 aa).

This sequence belongs to the YqgF nuclease family.

The protein localises to the cytoplasm. In terms of biological role, could be a nuclease involved in processing of the 5'-end of pre-16S rRNA. In Escherichia coli O45:K1 (strain S88 / ExPEC), this protein is Putative pre-16S rRNA nuclease.